Here is a 777-residue protein sequence, read N- to C-terminus: Phosphate transporter PHO1 homolog 10 (777 aa).

In terms of domain architecture, SPX spans 1–322 (MKFGKIFKKQ…SRNASRNYMK (322 aa)). The Cytoplasmic portion of the chain corresponds to 1 to 372 (MKFGKIFKKQ…RPKVKRERHR (372 aa)). Residues 373-393 (VTFFSGFFSGCSIALVIAVVF) traverse the membrane as a helical segment. Residues 394–408 (KIESRKIMEKNYGTE) are Extracellular-facing. The chain crosses the membrane as a helical span at residues 409–429 (YMANIIPLYSLFGFIILHMLM). Over 430-459 (YSANIYFWKRYRVNYTFIFGFKQGTELGDR) the chain is Cytoplasmic. The chain crosses the membrane as a helical span at residues 460–480 (EVFLVSTGLAVLAFVCFLLNL). Residues 481–496 (QLDMDWRMKHHKTLPE) are Extracellular-facing. A helical transmembrane segment spans residues 497–517 (VIPLCLATIVLFILFCPFNII). At 518–646 (YRSSRFFFIR…YELKKGRTWM (129 aa)) the chain is on the cytoplasmic side. The EXS domain maps to 581–775 (HSHGVYNAFY…HYYDDDDVDK (195 aa)). A helical membrane pass occupies residues 647 to 667 (ILALVSSGVATGMNTFWDIVI). Residues 668–691 (DWGLLRKHSKNPYLRDKLLVPHKS) are Extracellular-facing. The chain crosses the membrane as a helical span at residues 692-712 (VYFAAMVVNVILRVAWMQLVL). At 713–777 (EFNLKSLHKI…YDDDDVDKDD (65 aa)) the chain is on the cytoplasmic side.

Belongs to the SYG1 (TC 2.A.94) family. As to expression, expressed in root epidermis and cortex, leaf blades and hydathodes, stems and flowers.

It localises to the cell membrane. May transport inorganic phosphate (Pi). The protein is Phosphate transporter PHO1 homolog 10 (PHO1-H10) of Arabidopsis thaliana (Mouse-ear cress).